Reading from the N-terminus, the 306-residue chain is UDP-3-O-acyl-N-acetylglucosamine deacetylase (306 aa).

3 residues coordinate Zn(2+): H79, H238, and D242. The Proton donor role is filled by H265.

It belongs to the LpxC family. The cofactor is Zn(2+).

The catalysed reaction is a UDP-3-O-[(3R)-3-hydroxyacyl]-N-acetyl-alpha-D-glucosamine + H2O = a UDP-3-O-[(3R)-3-hydroxyacyl]-alpha-D-glucosamine + acetate. It participates in glycolipid biosynthesis; lipid IV(A) biosynthesis; lipid IV(A) from (3R)-3-hydroxytetradecanoyl-[acyl-carrier-protein] and UDP-N-acetyl-alpha-D-glucosamine: step 2/6. Catalyzes the hydrolysis of UDP-3-O-myristoyl-N-acetylglucosamine to form UDP-3-O-myristoylglucosamine and acetate, the committed step in lipid A biosynthesis. This is UDP-3-O-acyl-N-acetylglucosamine deacetylase from Shewanella violacea (strain JCM 10179 / CIP 106290 / LMG 19151 / DSS12).